The primary structure comprises 153 residues: SsrA-binding protein (153 aa).

It belongs to the SmpB family.

The protein localises to the cytoplasm. Functionally, required for rescue of stalled ribosomes mediated by trans-translation. Binds to transfer-messenger RNA (tmRNA), required for stable association of tmRNA with ribosomes. tmRNA and SmpB together mimic tRNA shape, replacing the anticodon stem-loop with SmpB. tmRNA is encoded by the ssrA gene; the 2 termini fold to resemble tRNA(Ala) and it encodes a 'tag peptide', a short internal open reading frame. During trans-translation Ala-aminoacylated tmRNA acts like a tRNA, entering the A-site of stalled ribosomes, displacing the stalled mRNA. The ribosome then switches to translate the ORF on the tmRNA; the nascent peptide is terminated with the 'tag peptide' encoded by the tmRNA and targeted for degradation. The ribosome is freed to recommence translation, which seems to be the essential function of trans-translation. This is SsrA-binding protein from Lactobacillus delbrueckii subsp. bulgaricus (strain ATCC 11842 / DSM 20081 / BCRC 10696 / JCM 1002 / NBRC 13953 / NCIMB 11778 / NCTC 12712 / WDCM 00102 / Lb 14).